Here is a 144-residue protein sequence, read N- to C-terminus: Large ribosomal subunit protein uL15 (144 aa).

Residues 1 to 48 (MQLNNLKPADGSKHAKRRVGRGIGSGLGKTAGRGHKGQKSRSGGFHKV) are disordered. Over residues 21-31 (RGIGSGLGKTA) the composition is skewed to gly residues.

Belongs to the universal ribosomal protein uL15 family. Part of the 50S ribosomal subunit.

Binds to the 23S rRNA. The chain is Large ribosomal subunit protein uL15 from Cupriavidus metallidurans (strain ATCC 43123 / DSM 2839 / NBRC 102507 / CH34) (Ralstonia metallidurans).